The following is an 82-amino-acid chain: Large ribosomal subunit protein bL27 (82 aa).

Residues 1–20 (MAHKKGASSSRNGRDSNPQY) form a disordered region. Residues 7–19 (ASSSRNGRDSNPQ) are compositionally biased toward polar residues.

The protein belongs to the bacterial ribosomal protein bL27 family.

This chain is Large ribosomal subunit protein bL27, found in Bifidobacterium longum (strain NCC 2705).